A 253-amino-acid chain; its full sequence is MATTNKVYFIAGGNRGIGLSLVKELSSREGTTVFASARKPEAATELQEWSKSHPNVKTVELDVTSQQSANEAAQSVAKAVDGIDVLWLNSGICQSYYTVMEAPEEVWNAHYQTNVLGPIHVFKAFYPLLTKKKTRQVIFTSSECGSMGDFRATGFSAYGQSKAAINFTMKELSVELADEHFTFISIHPGVVKTDMNADAIKKFTETSPEMLTYLKKVTIIPEESVSSMLKVVDNLKPENNGSFYRYDGTIIPF.

Ile17, Ser36, Asp62, Asn89, Lys123, Tyr158, Lys162, Val191, and Thr193 together coordinate NADP(+). Tyr158 (proton acceptor) is an active-site residue. Catalysis depends on Lys162, which acts as the Lowers pKa of active site Tyr.

Belongs to the short-chain dehydrogenases/reductases (SDR) family.

The protein resides in the cytoplasm. It localises to the nucleus. This is an uncharacterized protein from Schizosaccharomyces pombe (strain 972 / ATCC 24843) (Fission yeast).